The primary structure comprises 314 residues: Peroxisome biogenesis factor 10 (314 aa).

The Peroxisomal matrix segment spans residues 1 to 7 (MNTYVAE). A helical membrane pass occupies residues 8 to 37 (IGEIVRSQRRDEEYIEDITERLSRVSKELL). Position 38 (glycine 38) is a topological domain, cytoplasmic. A helical membrane pass occupies residues 39–60 (QRTWIRWFPYLKSIASTLYYTS). Over 61–90 (TVVLGNQTLGEEYVHLFESNGLERTVPSIP) the chain is Peroxisomal matrix. The chain crosses the membrane as a helical span at residues 91–110 (SRISFVLLHSAFPLISNYLI). Residues 111-142 (QKAESTLTHPSTESFLGIPIRKNQKARQSFLD) lie on the Cytoplasmic side of the membrane. Residues 143–166 (VFFWLRTKLFPQLQRAHIALFYIT) form a helical membrane-spanning segment. The Peroxisomal matrix portion of the chain corresponds to 167–197 (GAYYSIARRFTGIRFLSASAHSDIPALKVYR). Residues 198–218 (FLGYITLIQLAVSIGISLYSF) traverse the membrane as a helical segment. The Cytoplasmic portion of the chain corresponds to 219–314 (LEQEKFNNKL…PRDVTPLLNL (96 aa)). Zn(2+) is bound by residues cysteine 255, cysteine 258, cysteine 269, histidine 271, cysteine 274, cysteine 277, cysteine 296, and cysteine 299. Residues 255–300 (CSICLENKNPSALFCGHLFCWTCIQEHAVAATSSASTSSARCPQCR) form an RING-type zinc finger.

This sequence belongs to the pex2/pex10/pex12 family. In terms of assembly, component of the PEX2-PEX10-PEX12 retrotranslocation channel.

Its subcellular location is the peroxisome membrane. The catalysed reaction is S-ubiquitinyl-[E2 ubiquitin-conjugating enzyme]-L-cysteine + [acceptor protein]-L-lysine = [E2 ubiquitin-conjugating enzyme]-L-cysteine + N(6)-ubiquitinyl-[acceptor protein]-L-lysine.. It participates in protein modification; protein ubiquitination. With respect to regulation, the E3 ubiquitin-protein ligase activity is stimulated by PEX12/prx-12. E3 ubiquitin-protein ligase component of a retrotranslocation channel required for peroxisome organization by mediating export of the PEX5/prx-5 receptor from peroxisomes to the cytosol, thereby promoting PEX5/prx-5 recycling. The retrotranslocation channel is composed of PEX2/prx-2, PEX10/prx-10 and PEX12/prx-12; each subunit contributing transmembrane segments that coassemble into an open channel that specifically allows the passage of PEX5/prx-5 through the peroxisomal membrane. PEX10/prx-10 also regulates PEX5 recycling by acting as a E3 ubiquitin-protein ligase. When PEX5/prx-5 recycling is compromised, PEX10/prx-10 catalyzes polyubiquitination of PEX5/prx-5 during its passage through the retrotranslocation channel, leading to its degradation. The chain is Peroxisome biogenesis factor 10 from Caenorhabditis elegans.